Here is a 230-residue protein sequence, read N- to C-terminus: PKHD-type hydroxylase XF_0598 (230 aa).

One can recognise a Fe2OG dioxygenase domain in the interval 78-182 (RTLPPRFNCY…RIASFFWVQS (105 aa)). Fe cation-binding residues include histidine 96, aspartate 98, and histidine 163. Arginine 173 serves as a coordination point for 2-oxoglutarate.

Fe(2+) is required as a cofactor. It depends on L-ascorbate as a cofactor.

The polypeptide is PKHD-type hydroxylase XF_0598 (Xylella fastidiosa (strain 9a5c)).